We begin with the raw amino-acid sequence, 115 residues long: NADH-ubiquinone oxidoreductase chain 3 (115 aa).

3 helical membrane passes run 4–24, 55–75, and 87–107; these read LTVL…AFWL, FFLV…LLPL, and MMLT…YEWM.

The protein belongs to the complex I subunit 3 family. As to quaternary structure, core subunit of respiratory chain NADH dehydrogenase (Complex I) which is composed of 45 different subunits. Interacts with TMEM186. Interacts with TMEM242.

Its subcellular location is the mitochondrion inner membrane. It carries out the reaction a ubiquinone + NADH + 5 H(+)(in) = a ubiquinol + NAD(+) + 4 H(+)(out). Its function is as follows. Core subunit of the mitochondrial membrane respiratory chain NADH dehydrogenase (Complex I) which catalyzes electron transfer from NADH through the respiratory chain, using ubiquinone as an electron acceptor. Essential for the catalytic activity of complex I. This Peromyscus slevini (Slevin's mouse) protein is NADH-ubiquinone oxidoreductase chain 3.